The chain runs to 296 residues: Phosphoribosylaminoimidazole-succinocarboxamide synthase (296 aa).

It belongs to the SAICAR synthetase family.

It carries out the reaction 5-amino-1-(5-phospho-D-ribosyl)imidazole-4-carboxylate + L-aspartate + ATP = (2S)-2-[5-amino-1-(5-phospho-beta-D-ribosyl)imidazole-4-carboxamido]succinate + ADP + phosphate + 2 H(+). Its pathway is purine metabolism; IMP biosynthesis via de novo pathway; 5-amino-1-(5-phospho-D-ribosyl)imidazole-4-carboxamide from 5-amino-1-(5-phospho-D-ribosyl)imidazole-4-carboxylate: step 1/2. This Citrifermentans bemidjiense (strain ATCC BAA-1014 / DSM 16622 / JCM 12645 / Bem) (Geobacter bemidjiensis) protein is Phosphoribosylaminoimidazole-succinocarboxamide synthase.